The sequence spans 360 residues: Phospho-N-acetylmuramoyl-pentapeptide-transferase (360 aa).

Helical transmembrane passes span Tyr21–Gly41, Thr73–Leu93, Val98–Trp118, Trp132–Gly152, Phe168–Ser188, Gly199–Thr219, Ala236–Tyr256, Val263–Leu283, Leu288–Val308, and Val338–Lys358.

It belongs to the glycosyltransferase 4 family. MraY subfamily. It depends on Mg(2+) as a cofactor.

It localises to the cell inner membrane. It carries out the reaction UDP-N-acetyl-alpha-D-muramoyl-L-alanyl-gamma-D-glutamyl-meso-2,6-diaminopimeloyl-D-alanyl-D-alanine + di-trans,octa-cis-undecaprenyl phosphate = di-trans,octa-cis-undecaprenyl diphospho-N-acetyl-alpha-D-muramoyl-L-alanyl-D-glutamyl-meso-2,6-diaminopimeloyl-D-alanyl-D-alanine + UMP. The protein operates within cell wall biogenesis; peptidoglycan biosynthesis. In terms of biological role, catalyzes the initial step of the lipid cycle reactions in the biosynthesis of the cell wall peptidoglycan: transfers peptidoglycan precursor phospho-MurNAc-pentapeptide from UDP-MurNAc-pentapeptide onto the lipid carrier undecaprenyl phosphate, yielding undecaprenyl-pyrophosphoryl-MurNAc-pentapeptide, known as lipid I. The chain is Phospho-N-acetylmuramoyl-pentapeptide-transferase from Actinobacillus pleuropneumoniae serotype 7 (strain AP76).